The following is a 223-amino-acid chain: ATP-dependent dethiobiotin synthetase BioD (223 aa).

Thr-16 provides a ligand contact to Mg(2+). Lys-37 is an active-site residue. Substrate is bound at residue Ser-41. Mg(2+) contacts are provided by Asp-50 and Glu-111. ATP-binding positions include Asp-50, 111 to 114, and 171 to 172; these read EGAG and NR.

This sequence belongs to the dethiobiotin synthetase family. As to quaternary structure, homodimer. Requires Mg(2+) as cofactor.

The protein localises to the cytoplasm. The catalysed reaction is (7R,8S)-7,8-diammoniononanoate + CO2 + ATP = (4R,5S)-dethiobiotin + ADP + phosphate + 3 H(+). The protein operates within cofactor biosynthesis; biotin biosynthesis; biotin from 7,8-diaminononanoate: step 1/2. Its function is as follows. Catalyzes a mechanistically unusual reaction, the ATP-dependent insertion of CO2 between the N7 and N8 nitrogen atoms of 7,8-diaminopelargonic acid (DAPA, also called 7,8-diammoniononanoate) to form a ureido ring. This is ATP-dependent dethiobiotin synthetase BioD from Anaeromyxobacter dehalogenans (strain 2CP-C).